A 435-amino-acid chain; its full sequence is Cytochrome c biogenesis protein CcsB (435 aa).

The next 3 membrane-spanning stretches (helical) occupy residues L14–L34, S72–R92, and V162–A182.

The protein belongs to the Ccs1/CcsB family. In terms of assembly, may interact with CcsA.

The protein localises to the cellular thylakoid membrane. Required during biogenesis of c-type cytochromes (cytochrome c6 and cytochrome f) at the step of heme attachment. This is Cytochrome c biogenesis protein CcsB from Synechococcus sp. (strain CC9311).